Here is a 116-residue protein sequence, read N- to C-terminus: Iron-sulfur cluster assembly protein CyaY (116 aa).

It belongs to the frataxin family.

Functionally, involved in iron-sulfur (Fe-S) cluster assembly. May act as a regulator of Fe-S biogenesis. The chain is Iron-sulfur cluster assembly protein CyaY from Buchnera aphidicola subsp. Acyrthosiphon pisum (strain APS) (Acyrthosiphon pisum symbiotic bacterium).